Reading from the N-terminus, the 622-residue chain is Low affinity potassium transport system protein Kup (622 aa).

12 helical membrane-spanning segments follow: residues 12-32 (ITLA…LYTL), 49-69 (VFGF…LKYL), 101-121 (FLVI…VITP), 134-154 (IIAP…LTLL), 163-183 (GLVG…LAAL), 213-233 (VSFV…ALYA), 247-267 (WFTV…ALLL), 276-296 (PFFL…ATLA), 337-357 (IYIP…IVSF), 363-383 (LAAA…ILST), 395-415 (FLVA…FSAN), and 419-439 (IVSG…VMTT).

The protein belongs to the HAK/KUP transporter (TC 2.A.72) family.

The protein resides in the cell inner membrane. It carries out the reaction K(+)(in) + H(+)(in) = K(+)(out) + H(+)(out). Functionally, responsible for the low-affinity transport of potassium into the cell. Likely operates as a K(+):H(+) symporter. This is Low affinity potassium transport system protein Kup from Enterobacter sp. (strain 638).